The chain runs to 144 residues: 3-hydroxyacyl-[acyl-carrier-protein] dehydratase FabZ (144 aa).

Histidine 52 is a catalytic residue.

The protein belongs to the thioester dehydratase family. FabZ subfamily.

Its subcellular location is the cytoplasm. It carries out the reaction a (3R)-hydroxyacyl-[ACP] = a (2E)-enoyl-[ACP] + H2O. In terms of biological role, involved in unsaturated fatty acids biosynthesis. Catalyzes the dehydration of short chain beta-hydroxyacyl-ACPs and long chain saturated and unsaturated beta-hydroxyacyl-ACPs. In Syntrophomonas wolfei subsp. wolfei (strain DSM 2245B / Goettingen), this protein is 3-hydroxyacyl-[acyl-carrier-protein] dehydratase FabZ.